A 739-amino-acid chain; its full sequence is Transcription regulator protein BACH1 (739 aa).

Positions 34–100 (CDVTVLVEGQ…AYTAKLILSK (67 aa)) constitute a BTB domain. Serine 196 carries the post-translational modification Phosphoserine. Disordered stretches follow at residues 287-321 (MESE…PHGL) and 344-391 (KTVK…RSSV). Composition is skewed to basic and acidic residues over residues 346 to 364 (VKTE…KPSE) and 376 to 391 (PKED…RSSV). A Phosphoserine modification is found at serine 448. The bZIP domain maps to 560–623 (CIHDIRRRSK…GETKQNLTGL (64 aa)). Positions 565-581 (RRRSKNRIAAQRCRKRK) are basic motif. The tract at residues 585-592 (IQNLESEI) is leucine-zipper. The segment at 679 to 708 (PPTAPPPCGRGSSAASQELVQESPPTTAAA) is disordered. The segment covering 699 to 708 (QESPPTTAAA) has biased composition (low complexity).

It belongs to the bZIP family. CNC subfamily. In terms of assembly, heterodimer of BACH1 and MAFK. Ubiquitinated by the SCF(FBXL17) complex or by the by the SCF(FBXO22) complex, leading to its degradation by the proteasome. Under oxidative stress, reactive oxygen species covalently modify cysteine residues on the bZIP domain of BACH1 and release it from chromatin. If the BTB domain of BACH1 remains intact, its beta1-alpha6 degron is recognized by FBXO22, promoting its ubiquitination and degradation. If the structural integrity of the beta1-alpha6 degron is compromised, FBXL17 will transiently associate with the BACH1 BTB dimer and remodel it into stably bound monomer for ubiquitination and degradation. Ubiquitous.

It localises to the nucleus. In terms of biological role, transcriptional regulator that acts as a repressor or activator, depending on the context. Binds to NF-E2 DNA binding sites. Plays important roles in coordinating transcription activation and repression by MAFK. Together with MAF, represses the transcription of genes under the control of the NFE2L2 oxidative stress pathway. This is Transcription regulator protein BACH1 (Bach1) from Mus musculus (Mouse).